The chain runs to 279 residues: Acetyl-coenzyme A carboxylase carboxyl transferase subunit beta (279 aa).

The CoA carboxyltransferase N-terminal domain maps to 27 to 279 (LFLACPYCGT…IVKLHHRTEI (253 aa)). 4 residues coordinate Zn(2+): Cys31, Cys34, Cys49, and Cys52. A C4-type zinc finger spans residues 31–52 (CPYCGTQMYNKQLGDYRVCAKC).

Belongs to the AccD/PCCB family. In terms of assembly, acetyl-CoA carboxylase is a heterohexamer composed of biotin carboxyl carrier protein (AccB), biotin carboxylase (AccC) and two subunits each of ACCase subunit alpha (AccA) and ACCase subunit beta (AccD). Zn(2+) is required as a cofactor.

The protein localises to the cytoplasm. The enzyme catalyses N(6)-carboxybiotinyl-L-lysyl-[protein] + acetyl-CoA = N(6)-biotinyl-L-lysyl-[protein] + malonyl-CoA. It participates in lipid metabolism; malonyl-CoA biosynthesis; malonyl-CoA from acetyl-CoA: step 1/1. Its function is as follows. Component of the acetyl coenzyme A carboxylase (ACC) complex. Biotin carboxylase (BC) catalyzes the carboxylation of biotin on its carrier protein (BCCP) and then the CO(2) group is transferred by the transcarboxylase to acetyl-CoA to form malonyl-CoA. In Leuconostoc citreum (strain KM20), this protein is Acetyl-coenzyme A carboxylase carboxyl transferase subunit beta.